The primary structure comprises 168 residues: Profilin-3 (168 aa).

The segment at 14 to 36 is disordered; it reads LSLEHSDKPQRRSRAKVKKKKKT. The span at 24 to 36 shows a compositional bias: basic residues; the sequence is RRSRAKVKKKKKT.

This sequence belongs to the profilin family. In terms of assembly, occurs in many kinds of cells as a complex with monomeric actin in a 1:1 ratio. Binding to the poly-proline motif of formins induces formation of oligomers through the N-terminal hydrophobic residues of PRF3. In terms of tissue distribution, expressed in roots, rosette leaves, cauline leaves, stems and flowers.

It is found in the cytoplasm. It localises to the cytoskeleton. Its function is as follows. Binds to actin monomers and regulates the organization of the actin cytoskeleton. Can increase the critical concentration (Cc) of actin assembly in vitro. Acts as a downstream effector of the hydrogen sulfide signaling to regulate the assembly and depolymerization of F-actin. At high concentrations, profilin prevents the polymerization of actin, whereas it enhances it at low concentrations. Binding to the poly-proline motif of formin induces oligomerization of PRF3. PRF3 oligomers inhibit formin-mediated actin assembly to modulate plant immunity triggered by pathogen-associated molecular patterns (PAMPs). The sequence is that of Profilin-3 from Arabidopsis thaliana (Mouse-ear cress).